A 177-amino-acid polypeptide reads, in one-letter code: RNA pyrophosphohydrolase (177 aa).

The 144-residue stretch at 6 to 149 folds into the Nudix hydrolase domain; the sequence is GYRPNVGIVI…KRDVYRRVMK (144 aa). The Nudix box motif lies at 38–59; the sequence is GGINPGESAEQAMYRELFEEVG.

It belongs to the Nudix hydrolase family. RppH subfamily. A divalent metal cation is required as a cofactor.

In terms of biological role, accelerates the degradation of transcripts by removing pyrophosphate from the 5'-end of triphosphorylated RNA, leading to a more labile monophosphorylated state that can stimulate subsequent ribonuclease cleavage. The sequence is that of RNA pyrophosphohydrolase from Cronobacter sakazakii (strain ATCC BAA-894) (Enterobacter sakazakii).